Consider the following 502-residue polypeptide: Tryptophan decarboxylase TDC1 (502 aa).

The span at 1–18 (MGSLDSNYDTESPASVGQ) shows a compositional bias: polar residues. Residues 1 to 21 (MGSLDSNYDTESPASVGQFNP) form a disordered region. Lysine 319 carries the post-translational modification N6-(pyridoxal phosphate)lysine.

Belongs to the group II decarboxylase family. Pyridoxal 5'-phosphate serves as cofactor. As to expression, highly expressed in apex. Expressed in young stem and bark tissues. Expressed at low levels in leaves, fruits and seeds.

The catalysed reaction is L-tryptophan + H(+) = tryptamine + CO2. Functionally, involved in the biosynthesis of tryptamine. Supplies tryptamine for the indole moiety of camptothecin (CPT), an anti-cancer monoterpene alkaloid. Represents a key step in monoterpene indole alkaloid biosynthesis. Is specific for tryptophan, and inactive against tyrosine, phenylalanine and 3,4-dihydroxyphenylalanine (dopa). The protein is Tryptophan decarboxylase TDC1 of Camptotheca acuminata (Happy tree).